The primary structure comprises 320 residues: UV DNA damage endonuclease (320 aa).

It belongs to the uve1/UvsE family.

Its function is as follows. Component in a DNA repair pathway. Removal of UV LIGHT damaged nucleotides. Recognizes pyrimidine dimers and cleave a phosphodiester bond immediately 5' to the lesion. The polypeptide is UV DNA damage endonuclease (Bacillus pumilus (strain SAFR-032)).